The following is a 151-amino-acid chain: Small ribosomal subunit protein bS6 (151 aa).

Positions 97-151 (EAEPSAMMQKRDRDDRKDRDRGDRPRRRDDDFGGGDRGDRGDRGDRPERNFGGEN) are disordered. Residues 105-151 (QKRDRDDRKDRDRGDRPRRRDDDFGGGDRGDRGDRGDRPERNFGGEN) are compositionally biased toward basic and acidic residues.

It belongs to the bacterial ribosomal protein bS6 family.

In terms of biological role, binds together with bS18 to 16S ribosomal RNA. In Methylorubrum extorquens (strain CM4 / NCIMB 13688) (Methylobacterium extorquens), this protein is Small ribosomal subunit protein bS6.